The chain runs to 228 residues: 2-C-methyl-D-erythritol 4-phosphate cytidylyltransferase (228 aa).

It belongs to the IspD/TarI cytidylyltransferase family. IspD subfamily.

The catalysed reaction is 2-C-methyl-D-erythritol 4-phosphate + CTP + H(+) = 4-CDP-2-C-methyl-D-erythritol + diphosphate. Its pathway is isoprenoid biosynthesis; isopentenyl diphosphate biosynthesis via DXP pathway; isopentenyl diphosphate from 1-deoxy-D-xylulose 5-phosphate: step 2/6. Catalyzes the formation of 4-diphosphocytidyl-2-C-methyl-D-erythritol from CTP and 2-C-methyl-D-erythritol 4-phosphate (MEP). The chain is 2-C-methyl-D-erythritol 4-phosphate cytidylyltransferase from Crocosphaera subtropica (strain ATCC 51142 / BH68) (Cyanothece sp. (strain ATCC 51142)).